We begin with the raw amino-acid sequence, 140 residues long: MVRRVVATGTFDILHPGHVLYLCEARKHGDELWVIVARESTIKHKRKPLIPEEQRLFMVQSLKCVDHAVLGSETDMFEPIRQIQPEVIAIGFNQHWNENELKKQLAERGIKAEIVRIQTSDHSPYASSRTIRQKIKESDP.

Residues 10 to 11 (TF), 15 to 18 (HPGH), and N93 each bind ATP.

The protein belongs to the archaeal FAD synthase family. As to quaternary structure, homodimer. It depends on a divalent metal cation as a cofactor.

It catalyses the reaction FMN + ATP + H(+) = FAD + diphosphate. The protein operates within cofactor biosynthesis; FAD biosynthesis; FAD from FMN: step 1/1. In terms of biological role, catalyzes the transfer of the AMP portion of ATP to flavin mononucleotide (FMN) to produce flavin adenine dinucleotide (FAD) coenzyme. This is FAD synthase from Methanocella arvoryzae (strain DSM 22066 / NBRC 105507 / MRE50).